Here is a 345-residue protein sequence, read N- to C-terminus: 3-isopropylmalate dehydrogenase (345 aa).

NAD(+) is bound at residue 74–87 (GPKWDGLPRKISPE). The substrate site is built by R94, R104, R132, and D217. The Mg(2+) site is built by D217, D241, and D245. 274–286 (GSAPDIAGKGIAN) is a binding site for NAD(+).

Belongs to the isocitrate and isopropylmalate dehydrogenases family. LeuB type 1 subfamily. As to quaternary structure, homodimer. The cofactor is Mg(2+). Mn(2+) is required as a cofactor.

The protein resides in the cytoplasm. The catalysed reaction is (2R,3S)-3-isopropylmalate + NAD(+) = 4-methyl-2-oxopentanoate + CO2 + NADH. Its pathway is amino-acid biosynthesis; L-leucine biosynthesis; L-leucine from 3-methyl-2-oxobutanoate: step 3/4. Its function is as follows. Catalyzes the oxidation of 3-carboxy-2-hydroxy-4-methylpentanoate (3-isopropylmalate) to 3-carboxy-4-methyl-2-oxopentanoate. The product decarboxylates to 4-methyl-2 oxopentanoate. This Thermus thermophilus protein is 3-isopropylmalate dehydrogenase (leuB).